A 421-amino-acid polypeptide reads, in one-letter code: Divalent metal cation transporter MntH (421 aa).

A run of 11 helical transmembrane segments spans residues leucine 27–isoleucine 47, serine 51–leucine 71, tryptophan 100–glycine 120, leucine 128–valine 148, glycine 160–alanine 180, alanine 201–histidine 221, isoleucine 248–alanine 268, proline 289–serine 309, leucine 337–leucine 357, isoleucine 358–isoleucine 378, and isoleucine 396–threonine 416.

This sequence belongs to the NRAMP family.

The protein localises to the cell membrane. H(+)-stimulated, divalent metal cation uptake system. In Caldanaerobacter subterraneus subsp. tengcongensis (strain DSM 15242 / JCM 11007 / NBRC 100824 / MB4) (Thermoanaerobacter tengcongensis), this protein is Divalent metal cation transporter MntH.